The chain runs to 625 residues: Sorting nexin-41 (625 aa).

Residues 1-90 (MDYNIFEAVH…STSSHAVVEA (90 aa)) form a disordered region. Residues 54 to 86 (SPPSSSSLPSSPAHSSSAGSSRASTSSSTSSHA) show a composition bias toward low complexity. The 138-residue stretch at 98–235 (VSLSMSTTAT…QKFLNPEFNW (138 aa)) folds into the PX domain. Residues R153, S155, K179, and R202 each coordinate a 1,2-diacyl-sn-glycero-3-phospho-(1D-myo-inositol-3-phosphate). 2 coiled-coil regions span residues 437-469 (QFKI…NESL) and 539-563 (QLTE…KDCL).

The protein belongs to the sorting nexin family. As to quaternary structure, binds to SNX4.

The protein localises to the prevacuolar compartment. It localises to the endosome. It is found in the endosome membrane. Functionally, involved in proper sorting of the v-SNARE protein SNC1. This chain is Sorting nexin-41 (SNX41), found in Saccharomyces cerevisiae (strain ATCC 204508 / S288c) (Baker's yeast).